The sequence spans 524 residues: Bifunctional purine biosynthesis protein PurH (524 aa).

Residues 1 to 144 (MTRRALVSVS…KNSAHVGVVV (144 aa)) form the MGS-like domain.

Belongs to the PurH family.

It carries out the reaction (6R)-10-formyltetrahydrofolate + 5-amino-1-(5-phospho-beta-D-ribosyl)imidazole-4-carboxamide = 5-formamido-1-(5-phospho-D-ribosyl)imidazole-4-carboxamide + (6S)-5,6,7,8-tetrahydrofolate. It catalyses the reaction IMP + H2O = 5-formamido-1-(5-phospho-D-ribosyl)imidazole-4-carboxamide. Its pathway is purine metabolism; IMP biosynthesis via de novo pathway; 5-formamido-1-(5-phospho-D-ribosyl)imidazole-4-carboxamide from 5-amino-1-(5-phospho-D-ribosyl)imidazole-4-carboxamide (10-formyl THF route): step 1/1. It functions in the pathway purine metabolism; IMP biosynthesis via de novo pathway; IMP from 5-formamido-1-(5-phospho-D-ribosyl)imidazole-4-carboxamide: step 1/1. This is Bifunctional purine biosynthesis protein PurH from Anaeromyxobacter sp. (strain K).